The chain runs to 91 residues: DNA-directed RNA polymerase subunit Rpo11 (91 aa).

This sequence belongs to the archaeal Rpo11/eukaryotic RPB11/RPC19 RNA polymerase subunit family. As to quaternary structure, part of the RNA polymerase complex.

Its subcellular location is the cytoplasm. The enzyme catalyses RNA(n) + a ribonucleoside 5'-triphosphate = RNA(n+1) + diphosphate. DNA-dependent RNA polymerase (RNAP) catalyzes the transcription of DNA into RNA using the four ribonucleoside triphosphates as substrates. In Methanothrix thermoacetophila (strain DSM 6194 / JCM 14653 / NBRC 101360 / PT) (Methanosaeta thermophila), this protein is DNA-directed RNA polymerase subunit Rpo11.